The primary structure comprises 569 residues: MDFFSEYGDANRYKIQEVIGKGSYGVVCSAIDQHTGDKVAIKKIHNIFEHLSDAARILREIKLLRLLRHPDIVEIKHIMLPPSRRDFKDIYVVFELMDTDLHQVIKANDDLTKEHHQFFLYQMLRALKYIHTANVYHRDLKPKNILANANCKLKICDFGLARVAFNDTPTTVFWTDYVATRWYRAPELCGSFFTKYSPAIDIWSIGCIFAEILTGKPLFPGKNVVHQLDLMTDLLGTPSMDTVTRIRNEKARRYLSSMRKKQPVPFSERFPKADPAALKLLQRLLAFDPKDRPTAEEALADPYFKGLAKAEREPSCQPITKMEFEFERRKVTKEDVKELIFREILEYHPQLLKDYMNGTEKTNFLYPSALDNFRRQFANLEENGGKNGDAVPSDRKHVSLPRTTTVHSAPIPPKDHQNITSQVPQRIPGRTGRGACPVIPFENLSAMGPYNQRRVVRNPVLPPATTNLSAYAYHRKSDSSERELQQELEKDRMRYQPSEHFMDAKVVSHMSHDLRASSYYVSKAKSDVADRAALQSNMMQGIGPFNGIAAVGGNYNKVSTVQYGVSRMY.

Residues 13-304 (YKIQEVIGKG…AEEALADPYF (292 aa)) form the Protein kinase domain. ATP contacts are provided by residues 19–27 (IGKGSYGVV) and Lys-42. Asp-139 acts as the Proton acceptor in catalysis. A Phosphothreonine modification is found at Thr-175. The TXY signature appears at 175–177 (TDY). A Phosphotyrosine modification is found at Tyr-177. Residues 404–432 (TTVHSAPIPPKDHQNITSQVPQRIPGRTG) form a disordered region.

It belongs to the protein kinase superfamily. CMGC Ser/Thr protein kinase family. MAP kinase subfamily. Dually phosphorylated on Thr-175 and Tyr-177, which activates the enzyme. In terms of tissue distribution, expressed in leaves and panicles.

It catalyses the reaction L-seryl-[protein] + ATP = O-phospho-L-seryl-[protein] + ADP + H(+). The enzyme catalyses L-threonyl-[protein] + ATP = O-phospho-L-threonyl-[protein] + ADP + H(+). Activated by threonine and tyrosine phosphorylation. This Oryza sativa subsp. japonica (Rice) protein is Mitogen-activated protein kinase 8 (MPK8).